Here is a 1407-residue protein sequence, read N- to C-terminus: MKDLLKFLKSQTKNEDFDAIKISLASPDMIRSWSFGEVKKPETINYRTFKPERDGLFCARIFGPVKDYECLCGKYKRLKHRGVICEKCGVEVTQSKVRRERMGHIELSSPTAHIWFLKSLPSRIGLLLDMPLRDIERVLYFESYVVIETGMTNLEKRQILTEEQYLDSLEEFGDEFHATMGAEAIQFLLKDINLVQECNVLRIELNETNSETKRKKLTKRIKLLESFIQSHNKPEWMILNVLPVLPPDLRPLVPLDGGRFATSDLNDLYRRVINRNNRLKRLLDLAAPDIIVRNEKRMLQEAVDALLDNGRRGRAITGSNKRPLKSLADMIKGKQGRFRQNLLGKRVDYSGRSVITVGPYLHLHQCGLPKKMALELFKPFIYGKLEVRGLATTIKAAKKMVEREEAIVWDILDEVIREHPVLLNRAPTLHRLGIQAFEPVLIEGKAIQLHPLVCAAYNADFDGDQMAVHVPLTLESQLEARALMMSTNNILSPANGEPIIVPSQDVVLGLYYMTREKINGKGEGMLLNGSNEAEKVYRLGIAELHSLVKVRIIEYKKNEDKSFTAIKKIIPTTIGRAILWMIIPKGLPFSIVNQTLGKKDISKMLNTCYRILGLKSTVFFADQIMYTGFAYAARSGASVGIDDMVIPEKKANIINEAEIEVAEIQEQFQSGLVTAGERYNKVIDIWAAANERVAKAMMQNLSTESVINKKGYKQKQISFNSIFMMADSGARGSAAQIRQLAGMRGLMAKPDGSIIETPITANFREGLNVLQYFISTHGARKGLADTALKTANSGYLTRRLVDVAQDLVVTQDDCRTHEGILMTPLIEGGDVKEPLRERVLGRVTAENIIIPNTKNILIKRNTLLNEKWCDLLEHNSIDNVKVRSVVNCDTDFGVCAYCYGRDLARGNLVNKGEAIGVIAAQSIGEPGTQLTMRTFHIGGAASRAAAESSIQVKNQGIINLNNAKFVINSAGKTVITSRNVELNIIDNFGRTKESYKVPYGAIMAKGDGEKVHSGETVAKWDPHTMPVITEVNGLVRFVDMIDGQSITRQADELTGLSSIVILDTAERMSSGKDLRPALKIIDCNGNDVLISGTDMPAQYFLPGKAIVQLDDGVQISSGDTLARVPQESGGTKDITGGLPRVADLFEARRPKELAILAEISGIISFGKETKGKRRLVITPVDGSDSYEEMIPKWRQLNVFEGERVDRGDVISDGPESPHDILRLRGVQAVTRYIVNEVQEVYRLQGVKINDKHIEVIIRQMLRKATVVKSRDSDFLEGEQVEFSHIKISNRMLDKKKKMPATFSRDLLGITKASLATESFISAASFQETTRVLTESAVAGKRDELRGLKENVIVGRLIPAGTGYAYHKERLNRRQKKHNNPTVSSSQISAEEASASLSELLNSALIEK.

Positions 70, 72, 85, and 88 each coordinate Zn(2+). Mg(2+)-binding residues include aspartate 460, aspartate 462, and aspartate 464. Positions 814, 888, 895, and 898 each coordinate Zn(2+).

It belongs to the RNA polymerase beta' chain family. As to quaternary structure, the RNAP catalytic core consists of 2 alpha, 1 beta, 1 beta' and 1 omega subunit. When a sigma factor is associated with the core the holoenzyme is formed, which can initiate transcription. It depends on Mg(2+) as a cofactor. Zn(2+) serves as cofactor.

It catalyses the reaction RNA(n) + a ribonucleoside 5'-triphosphate = RNA(n+1) + diphosphate. Its function is as follows. DNA-dependent RNA polymerase catalyzes the transcription of DNA into RNA using the four ribonucleoside triphosphates as substrates. This is DNA-directed RNA polymerase subunit beta' from Buchnera aphidicola subsp. Acyrthosiphon pisum (strain APS) (Acyrthosiphon pisum symbiotic bacterium).